The primary structure comprises 477 residues: Glutamyl-tRNA(Gln) amidotransferase subunit A (477 aa).

Active-site charge relay system residues include Lys76 and Ser151. Residue Ser175 is the Acyl-ester intermediate of the active site.

This sequence belongs to the amidase family. GatA subfamily. As to quaternary structure, heterotrimer of A, B and C subunits.

The enzyme catalyses L-glutamyl-tRNA(Gln) + L-glutamine + ATP + H2O = L-glutaminyl-tRNA(Gln) + L-glutamate + ADP + phosphate + H(+). In terms of biological role, allows the formation of correctly charged Gln-tRNA(Gln) through the transamidation of misacylated Glu-tRNA(Gln) in organisms which lack glutaminyl-tRNA synthetase. The reaction takes place in the presence of glutamine and ATP through an activated gamma-phospho-Glu-tRNA(Gln). The protein is Glutamyl-tRNA(Gln) amidotransferase subunit A of Chlorobium phaeobacteroides (strain BS1).